A 518-amino-acid chain; its full sequence is 2-isopropylmalate synthase (518 aa).

The region spanning 5–269 is the Pyruvate carboxyltransferase domain; that stretch reads IIVLDTTLRD…STNVRLKELI (265 aa). Residues aspartate 14, histidine 204, histidine 206, and asparagine 240 each contribute to the Mn(2+) site. The segment at 397–518 is regulatory domain; sequence ELDSFQVVTN…HDSQAPVSAR (122 aa).

This sequence belongs to the alpha-IPM synthase/homocitrate synthase family. LeuA type 1 subfamily. As to quaternary structure, homodimer. Mn(2+) is required as a cofactor.

The protein resides in the cytoplasm. The catalysed reaction is 3-methyl-2-oxobutanoate + acetyl-CoA + H2O = (2S)-2-isopropylmalate + CoA + H(+). The protein operates within amino-acid biosynthesis; L-leucine biosynthesis; L-leucine from 3-methyl-2-oxobutanoate: step 1/4. In terms of biological role, catalyzes the condensation of the acetyl group of acetyl-CoA with 3-methyl-2-oxobutanoate (2-ketoisovalerate) to form 3-carboxy-3-hydroxy-4-methylpentanoate (2-isopropylmalate). The chain is 2-isopropylmalate synthase from Geobacillus sp. (strain Y412MC10).